The following is a 93-amino-acid chain: Small ribosomal subunit protein bS16 (93 aa).

The protein belongs to the bacterial ribosomal protein bS16 family.

The chain is Small ribosomal subunit protein bS16 from Roseiflexus castenholzii (strain DSM 13941 / HLO8).